The following is a 634-amino-acid chain: uncharacterized protein (634 aa).

The signal sequence occupies residues 1–40; that stretch reads MWLQQRLKGLPGLLSSSWARRLLCLLGLLLLLLWFGGSGA. Topologically, residues 41–589 are extracellular; the sequence is RRAAGGLHLL…DEHMAQQDPG (549 aa). N-linked (GlcNAc...) asparagine glycosylation occurs at N363. The chain crosses the membrane as a helical span at residues 590–610; the sequence is LPFLFWFSVASLITLFHLFLF. Topologically, residues 611-634 are cytoplasmic; sequence KLIYNEYCGPGAKPLFRSKEDPSV.

It localises to the membrane. This is an uncharacterized protein from Homo sapiens (Human).